Consider the following 507-residue polypeptide: TOM1-like protein 2 (507 aa).

The region spanning 20-152 (ATDGSLQSED…ELKRKGVEFP (133 aa)) is the VHS domain. The residue at position 160 (Ser160) is a Phosphoserine. The tract at residues 162–210 (IHTPQRSVPEVDPAATMPRSQSQQRTSAGSYSSPPPAPYSAPQAPALSV) is disordered. Thr164 bears the Phosphothreonine mark. The GAT domain maps to 219–307 (EQIARLRSEL…VFLRYERFER (89 aa)). The short motif at 329–334 (NLIDLG) is the Clathrin-binding element. Positions 467–507 (RAKAAEMVPDLPSPPMEAPAPASNPSGRKKPERSEDALFAL) are disordered. Residues 498 to 507 (ERSEDALFAL) are compositionally biased toward basic and acidic residues.

The protein belongs to the TOM1 family. As to quaternary structure, interacts with clathrin, SRC and TOLLIP. Interacts with MYO6. Ubiquitously expressed with higher expression in heart and skeletal muscle.

Functionally, acts as a MYO6/Myosin VI adapter protein that targets myosin VI to endocytic structures. May also play a role in recruiting clathrin to endosomes. May regulate growth factor-induced mitogenic signaling. This Homo sapiens (Human) protein is TOM1-like protein 2 (TOM1L2).